We begin with the raw amino-acid sequence, 2710 residues long: MANFSSHIQELRELIAASSTTTSTSAPASVHFEVKLREVLPNLLRDYVVPSSPTADGREATAVLKLLSYTAGKFPGVFFHGRAADVIRVIGRVLPFFAEPNFRSRHEIIFDTVWSLLSLLRTGDREAYRQFFLDVMVAVQDVLYVVASMHGDRPSGVLTERYLVKCLCGSFSDILDSPGIFSDLPDSCQPKNGPGVLVDLTGETRWRPFATMLIKLVNKCLADGTLYVEGLVNMPFVSAACSIICYGDESLHKVCFDFARIVATVITVEILPVENIIRSIMCILSQDVNGLSDIRDADYDFSMGACLHALHSSCPGYIVAITASDIVNVFQRAVHTSRSSELQVAMCNAYKRIVELCSPRVWKPEILLKLLCLPKPCAKLIECIRLVVDKSGQSFLSSDDRDDGSSLLAKSEGLDLPKVGQKRIALDEENSFPKRLKMTEPRFSSGSFMVDELSAGVGQELEKDHGCDFRVQLYSLINCLSPDNHMAYPLEPAIAIQVLSLLCLSLSVYPKTNLFSRISKQVLSWIPWICKQTTKICMFSFDVSLYFEAVQTVMLLQSFLPGHTKLFEDEPLLIGNGCTDFEYPRYADLINLLKLVSDDGYLTSQTCSEKLKCLAVQIIAKIGSRQNAECDLQVLELAIQSETGELQNEALMSLPIIVLYSGPRMLGAMFRKLETIGTLGCKKLWKSIAISLGFLSCLNGTTDCTDKVGNHCKLFLAKHCEQPILTLNLLRGFWCPQCDVRTVHIEDQVPIVDIALSEDKNIDFKINMFKAHSLFFKFLYAETSEECIVSIVEVLPRILKHSSRDVLLDMKFQWVQCVDFLLLHEMKAVRDAFSSVVSCFLETNAMDILFSDGTGMSGGTSRVKFMDKIKSAFTEAEDPQILLTLLESTAAIVKASDIHGEVFFCSFVLLIGQLGNHDYIVRVTALRLLQRCCTYCFKGGLELFLSKYFHVRDNLYDYLSSRLLTHPVVISEFAESVLGVKTEELIRRMVPSIIPKLIVSHQNNDQAVVTLNELASHLNSELVPLIVNSLPKVLSFALFYEDGQHLSSVLQFYHTETGTDSKEIFSAALPTLLDEIICFPGESDQIETDRRMAKISPTIQNIARILIGNDNLPEFLKNDFVRLLNSIDKKMLHSSDVNLQKQALQRIRKLVEMMGPYLSTHAPKIMVLLIFAIDKETLQMDGLDVLHFFIKRLAEVSCTSIKYVMSQVVAAFIPSLERCRERPLVHLGKIVEILEELVVKNIILLKQHIRELPLLPSLPSLSGVNKVIQEARGLMTLQDHLKDAVNGLNHESLNVRYMVACELNKLFNDRREDITSLIIGEDIADLDIISSLIMSLLKGCAEESRTVVGQRLKLVCADCLGALGAVDPAKFKVMSCERFKIECSDDDLIFELIHKHLARAFRAASDTTVQDSAALAIQELLKLSGCQSLPNESSSCKMSKRGQKLWGRFSSYVKEIIAPCLTSRFHLPSVNDATLAGPIYRPTMSFRRWIYYWIRKLTSHATGSRSGIFGACRGIVRHDMPTAIYLLPYLVLNVVCYGTPEARQSITEEILSVLNAAASESSGAIVHGITGGQSEVCIQAVFTLLDNLGQWVDDLKQEIALSQSNYAMAGRQGGKLRDESNSMYDQDQLLVQCSNVAELLAAIPKVTLAKASFRCQAHARALMYFESHVREKSGSSNPAADCSGAFSDDDISFLMEIYGGLDEPDGLLGLANLRKSSTLQDQLIINEKAGNWAEVLTLCEQSLQMEPDSVHRHCDVLNCLLNMCHLQAMIAHVDGLVYRIPQSKKTWCMQGVQAAWRLGRWDLMDEYLAEADKGLVCRSSENNASFDMGLAKIFNAMMKKDQFMVAEKIAQSKQALLVPLAAAGMDSYMRAYPYIVKLHMLRELEDFNSLLGDESFLEKPFAADDPKFLKLTKDWENRLRCTQPSLWAREPLLAFRRMVYNLSHMNAQAGNCWLQYARLCRLAGHYETAHRAILEADASGAPNAHMEKAKYLWNIRKSDSAIAELQQTLLNMPADVLGPTVLSSLSSLSLALPNAPLSVTQASKENPDVSKTLLLYTRWIHYTGQKQSNDIKSLYSRVADLRPKWEKGFFCIAKFYDDLLVDARRRQEDKKIASGVGPVPPSSTGSLTTATEEKPWWDMLPVVLIQYARGLHRGHKNLFQALPRLLTLWFEFGSIYIQDGSSFNKPMKEVHIRLLGIMRGCLKDLPPYQWLTVLSQLISRICHQNIEVVKLVKCIVTSILREYPQQALWMMAAVSKSTVAARRDAAAEILQSAKKGSRRGSDSNALFMQFPSLIDHLIKLCFHPGQPKARAINISTEFSSLKRMMPLGIILPIQQALTVTLPSYDTNMTDQSTFRPFSVSEHPTIAGIADDAEILNSLQKPKKVVFIGSDGISRPFLCKPKDDLRKDSRMMEFNAMINRLLSKVPESRRRKLYIRTFAVVPLTEDCGMVEWVPNTRGLRQILQDIYITCGKFDRMKTNPQIKKIYDQLQGKMPEEMLKAKILPMFPPVFHKWFLTTFSEPAAWIRARAAYAHTTAVWSMVGHIVGLGDRHGENILLDSTTGDCIHVDFSCLFDKGLLLEKPEVVPFRFTQNMVDGLGITGYEGVFVKVCEITLSVLRTHKEALMTVLETFIHDPLVEWTKSHKSSGVEVRNPHAQRAISNITERLQGVVVGVNAAPSLPLSVEGQARRLIAEAVSHSNLGKMYVWWMAWF.

In terms of domain architecture, FAT spans 1647–2257 (TLAKASFRCQ…LWMMAAVSKS (611 aa)). The region spanning 2368-2680 (IADDAEILNS…GVNAAPSLPL (313 aa)) is the PI3K/PI4K catalytic domain. The segment at 2374–2380 (ILNSLQK) is G-loop. The segment at 2545-2553 (GLGDRHGEN) is catalytic loop. An activation loop region spans residues 2565–2589 (HVDFSCLFDKGLLLEKPEVVPFRFT). The FATC domain occupies 2678-2710 (LPLSVEGQARRLIAEAVSHSNLGKMYVWWMAWF).

The protein belongs to the PI3/PI4-kinase family. ATM subfamily.

Its subcellular location is the nucleus. The enzyme catalyses L-seryl-[protein] + ATP = O-phospho-L-seryl-[protein] + ADP + H(+). It carries out the reaction L-threonyl-[protein] + ATP = O-phospho-L-threonyl-[protein] + ADP + H(+). Probable serine/threonine kinase. Seems to play a central role in cell-cycle regulation by transmitting DNA damage signals to downstream effectors of cell-cycle progression. May recognize the substrate consensus sequence [ST]-Q and phosphorylate histone variant H2AX to form H2AXS139ph at sites of DNA damage, thereby regulating DNA damage response mechanism. This chain is Serine/threonine-protein kinase ATR, found in Oryza sativa subsp. indica (Rice).